Reading from the N-terminus, the 117-residue chain is Large ribosomal subunit protein bL19 (117 aa).

Belongs to the bacterial ribosomal protein bL19 family.

This protein is located at the 30S-50S ribosomal subunit interface and may play a role in the structure and function of the aminoacyl-tRNA binding site. In Shewanella frigidimarina (strain NCIMB 400), this protein is Large ribosomal subunit protein bL19.